The following is a 207-amino-acid chain: MAEYTLPDLDYDYGALEPHISGQINELHHSKHHATYVKGVNDAIAKLEEARANGDHAAIFLNEKNLAFHLGGHINHSIWWKNLSPNGGDKPTGELAAAIDDQFGSFDKFQAQFTAAANGLQGSGWAVLGYDSLGGRLLTFQLYDQQANVPLGIIPLLQVDMWEHAFYLQYKNVKADYVKAFWNVVNWDDVQNRFAAATSKTSGLIFG.

Positions 28, 76, 160, and 164 each coordinate Mn(2+).

The protein belongs to the iron/manganese superoxide dismutase family. As to quaternary structure, homotetramer. It depends on Mn(2+) as a cofactor.

The protein resides in the secreted. The enzyme catalyses 2 superoxide + 2 H(+) = H2O2 + O2. Destroys superoxide anion radicals which are normally produced within the cells and which are toxic to biological systems. This is Superoxide dismutase [Mn] (sodA) from Mycolicibacterium smegmatis (Mycobacterium smegmatis).